A 506-amino-acid chain; its full sequence is Gamma-aminobutyric acid receptor subunit epsilon (506 aa).

The first 17 residues, 1–17, serve as a signal peptide directing secretion; sequence MLPKVLLMLLNMFLALQ. Residues 18-277 lie on the Extracellular side of the membrane; it reads WRVGPHIKLE…MTFFFNVSRR (260 aa). The segment at 32-65 is disordered; it reads AQDKVVFGPQPQPSGKKLPARETELTADHTTERP. The segment covering 50–65 has biased composition (basic and acidic residues); it reads PARETELTADHTTERP. Asn-135 is a glycosylation site (N-linked (GlcNAc...) asparagine). Cys-196 and Cys-210 are disulfide-bonded. N-linked (GlcNAc...) asparagine glycosylation occurs at Asn-253. Residues 278–298 traverse the membrane as a helical segment; the sequence is FGFIVFQNYIPSSVTTMLSWV. Topologically, residues 299 to 308 are cytoplasmic; the sequence is SFWIKIEAAA. Residues 309–328 form a helical membrane-spanning segment; it reads ARASVGVSSVLTMATLGTFS. Over 329–344 the chain is Extracellular; sequence RKNFPRVSYLTALDFY. Residues 345–365 form a helical membrane-spanning segment; the sequence is IAICFVLCFCTLLEFTVLNFL. Residues 366 to 485 lie on the Cytoplasmic side of the membrane; sequence TYNNIERQAS…HVYRLDNYSR (120 aa). A helical transmembrane segment spans residues 486–506; the sequence is VLFPITFFFFNVVYWVICLNL.

The protein belongs to the ligand-gated ion channel (TC 1.A.9) family. Gamma-aminobutyric acid receptor (TC 1.A.9.5) subfamily. GABRE sub-subfamily. As to quaternary structure, heteropentamer, formed by a combination of alpha (GABRA1-6), beta (GABRB1-3), gamma (GABRG1-3), delta (GABRD), epsilon (GABRE), rho (GABRR1-3), pi (GABRP) and theta (GABRQ) chains, each subunit exhibiting distinct physiological and pharmacological properties. In terms of tissue distribution, expressed in brain and heart. Strongly expressed in locus ceruleus from the first postnatal day. Weakly expressed in other brainstem nuclei and in the hypothalamus. Found in the cerebral cortex of pups.

Its subcellular location is the cell membrane. The protein localises to the postsynaptic cell membrane. The catalysed reaction is chloride(in) = chloride(out). Epsilon subunit of the heteropentameric ligand-gated chloride channel gated by gamma-aminobutyric acid (GABA), a major inhibitory neurotransmitter in the brain. GABA-gated chloride channels, also named GABA(A) receptors (GABAAR), consist of five subunits arranged around a central pore and contain GABA active binding site(s) located at the alpha and beta subunit interfaces. When activated by GABA, GABAARs selectively allow the flow of chloride anions across the cell membrane down their electrochemical gradient. GABARs containing epsilon subunit may also permit spontaneous chloride channel activity while preserving the structural information required for GABA-gated openings. GABARs containing epsilon subunit may regulate cardiac function. The polypeptide is Gamma-aminobutyric acid receptor subunit epsilon (Rattus norvegicus (Rat)).